Reading from the N-terminus, the 368-residue chain is Probable ubiquitin receptor RAD23a (368 aa).

The 77-residue stretch at 1-77 folds into the Ubiquitin-like domain; it reads MKLTVKTLKG…GFLVVMLSKS (77 aa). Low complexity predominate over residues 80–111; the sequence is ASSAGPSSTQPTSTTTSTISSTTLAAPSTTQS. Residues 80–136 form a disordered region; the sequence is ASSAGPSSTQPTSTTTSTISSTTLAAPSTTQSIAVPASNSTPVQEQPTAQSDTYGQA. Residues 116–136 are compositionally biased toward polar residues; the sequence is ASNSTPVQEQPTAQSDTYGQA. The UBA 1 domain occupies 142 to 185; that stretch reads SGSSIEQMVQQIMEMGGGSWDKETVTRALRAAYNNPERAVDYLY. Residues 202–222 form a disordered region; sequence VGSGRELTAPPPSGGPNSSPL. In terms of domain architecture, STI1 spans 239–282; that stretch reads GTLEFLRGNDQFQQLRSMVNSNPQILQPMLQELGKQNPQLLRLI. The UBA 2 domain maps to 320-360; it reads VTPEEQESIERLEAMGFDRAIVIEAFLSCDRNEELAANYLL.

It belongs to the RAD23 family. In terms of assembly, interacts with 'Lys-48'-linked polyubiquitin chains. Interacts with RPN10. In terms of tissue distribution, widely expressed in the whole plant.

It localises to the nucleus. It is found in the cytoplasm. Its function is as follows. May be involved in nucleotide excision repair. Binds and presumably selects ubiquitin-conjugates for destruction. Prefers multiubiquitin chains rather than single ubiquitins, with a binding affinity for 'Lys-48'-linked ubiquitin chains. Acts as a ubiquitin receptor that associates with the 26S proteasomal docking subunit RPN10 for the indirect recognition of ubiquitinated substrates of ubiquitin/26S proteasome-mediated proteolysis (UPP). Involved in UV tolerance in roots, specifically in dark conditions. This chain is Probable ubiquitin receptor RAD23a, found in Arabidopsis thaliana (Mouse-ear cress).